The chain runs to 657 residues: Zinc finger protein 630 (657 aa).

The KRAB domain maps to 8 to 79; that stretch reads VTFEDVAVDF…ESELSRWIYP (72 aa). C2H2-type zinc fingers lie at residues 263–285 and 291–313; these read NVCS…QRIH and YVCG…QRIH. A C2H2-type 3; degenerate zinc finger spans residues 319–341; the sequence is YECTKYGRAFSRKSPFTVHQRVH. 9 consecutive C2H2-type zinc fingers follow at residues 347–369, 375–397, 403–425, 431–453, 459–481, 487–509, 515–537, 543–565, and 571–593; these read YECF…QRVH, FECS…QITH, YECT…QRTH, YKCG…QRIH, YVCT…QRLH, YMCT…QRIH, YQCG…LRVH, YECT…QRGH, and YECS…QKTH. The C2H2-type 13; degenerate zinc finger occupies 599 to 621; that stretch reads PECAESGMTFFWKSQMITYQRRH. The C2H2-type 14; degenerate zinc finger occupies 627–649; that stretch reads SRCSDCGKAFCQHVYFTGHQNPY.

The protein belongs to the krueppel C2H2-type zinc-finger protein family.

It is found in the nucleus. In terms of biological role, may be involved in transcriptional regulation. The chain is Zinc finger protein 630 (ZNF630) from Homo sapiens (Human).